The sequence spans 230 residues: Enolase-phosphatase E1 (230 aa).

This sequence belongs to the HAD-like hydrolase superfamily. MasA/MtnC family. In terms of assembly, monomer. Mg(2+) is required as a cofactor.

It carries out the reaction 5-methylsulfanyl-2,3-dioxopentyl phosphate + H2O = 1,2-dihydroxy-5-(methylsulfanyl)pent-1-en-3-one + phosphate. It participates in amino-acid biosynthesis; L-methionine biosynthesis via salvage pathway; L-methionine from S-methyl-5-thio-alpha-D-ribose 1-phosphate: step 3/6. It functions in the pathway amino-acid biosynthesis; L-methionine biosynthesis via salvage pathway; L-methionine from S-methyl-5-thio-alpha-D-ribose 1-phosphate: step 4/6. Its function is as follows. Bifunctional enzyme that catalyzes the enolization of 2,3-diketo-5-methylthiopentyl-1-phosphate (DK-MTP-1-P) into the intermediate 2-hydroxy-3-keto-5-methylthiopentenyl-1-phosphate (HK-MTPenyl-1-P), which is then dephosphorylated to form the acireductone 1,2-dihydroxy-3-keto-5-methylthiopentene (DHK-MTPene). The sequence is that of Enolase-phosphatase E1 from Sulfurihydrogenibium sp. (strain YO3AOP1).